The primary structure comprises 321 residues: Phospho-N-acetylmuramoyl-pentapeptide-transferase (321 aa).

Helical transmembrane passes span methionine 1–isoleucine 21, methionine 50–isoleucine 70, isoleucine 76–isoleucine 96, phenylalanine 112–threonine 132, isoleucine 140–tryptophan 160, glycine 173–alanine 193, alanine 198–phenylalanine 218, valine 225–methionine 245, leucine 250–valine 270, and valine 300–valine 320.

It belongs to the glycosyltransferase 4 family. MraY subfamily. The cofactor is Mg(2+).

The protein localises to the cell membrane. It carries out the reaction UDP-N-acetyl-alpha-D-muramoyl-L-alanyl-gamma-D-glutamyl-L-lysyl-D-alanyl-D-alanine + di-trans,octa-cis-undecaprenyl phosphate = Mur2Ac(oyl-L-Ala-gamma-D-Glu-L-Lys-D-Ala-D-Ala)-di-trans,octa-cis-undecaprenyl diphosphate + UMP. It functions in the pathway cell wall biogenesis; peptidoglycan biosynthesis. Catalyzes the initial step of the lipid cycle reactions in the biosynthesis of the cell wall peptidoglycan: transfers peptidoglycan precursor phospho-MurNAc-pentapeptide from UDP-MurNAc-pentapeptide onto the lipid carrier undecaprenyl phosphate, yielding undecaprenyl-pyrophosphoryl-MurNAc-pentapeptide, known as lipid I. This is Phospho-N-acetylmuramoyl-pentapeptide-transferase from Staphylococcus saprophyticus subsp. saprophyticus (strain ATCC 15305 / DSM 20229 / NCIMB 8711 / NCTC 7292 / S-41).